We begin with the raw amino-acid sequence, 357 residues long: UDP-N-acetylglucosamine--N-acetylmuramyl-(pentapeptide) pyrophosphoryl-undecaprenol N-acetylglucosamine transferase (357 aa).

UDP-N-acetyl-alpha-D-glucosamine is bound by residues 14–16 (SGG), Asn125, Ser190, and Gln290.

It belongs to the glycosyltransferase 28 family. MurG subfamily.

It is found in the cell inner membrane. It carries out the reaction di-trans,octa-cis-undecaprenyl diphospho-N-acetyl-alpha-D-muramoyl-L-alanyl-D-glutamyl-meso-2,6-diaminopimeloyl-D-alanyl-D-alanine + UDP-N-acetyl-alpha-D-glucosamine = di-trans,octa-cis-undecaprenyl diphospho-[N-acetyl-alpha-D-glucosaminyl-(1-&gt;4)]-N-acetyl-alpha-D-muramoyl-L-alanyl-D-glutamyl-meso-2,6-diaminopimeloyl-D-alanyl-D-alanine + UDP + H(+). Its pathway is cell wall biogenesis; peptidoglycan biosynthesis. Its function is as follows. Cell wall formation. Catalyzes the transfer of a GlcNAc subunit on undecaprenyl-pyrophosphoryl-MurNAc-pentapeptide (lipid intermediate I) to form undecaprenyl-pyrophosphoryl-MurNAc-(pentapeptide)GlcNAc (lipid intermediate II). In Chlamydia felis (strain Fe/C-56) (Chlamydophila felis), this protein is UDP-N-acetylglucosamine--N-acetylmuramyl-(pentapeptide) pyrophosphoryl-undecaprenol N-acetylglucosamine transferase.